Here is a 396-residue protein sequence, read N- to C-terminus: Cell adhesion molecule 3 (396 aa).

The first 22 residues, 1–22 (MGAPSALPLLLLLACSWAPGGA), serve as a signal peptide directing secretion. An Ig-like V-type domain is found at 23 to 124 (NLSQDDSQPW…VRTAKSLVTV (102 aa)). Residues 23-328 (NLSQDDSQPW…PVPSSSSTYH (306 aa)) are Extracellular-facing. 3 cysteine pairs are disulfide-bonded: cysteine 48–cysteine 108, cysteine 150–cysteine 207, and cysteine 252–cysteine 297. Ig-like C2-type domains are found at residues 128 to 226 (PQKP…QRIE) and 231 to 313 (PTAM…FTLN). Asparagine 288 carries N-linked (GlcNAc...) asparagine glycosylation. The helical transmembrane segment at 329-349 (AIIGGIVAFIVFLLLILLIFL) threads the bilayer. Over 350-396 (GHYLIRHKGTYLTHEAKGSDDAPDADTAIINAEGGQSGGDDKKEYFI) the chain is Cytoplasmic. A disordered region spans residues 365–396 (AKGSDDAPDADTAIINAEGGQSGGDDKKEYFI). Position 386 is a phosphoserine (serine 386).

This sequence belongs to the nectin family. As to quaternary structure, homodimer. Can form trans-heterodimers with NECTIN3. Interacts with EPB41L1, DLG3, PALS2 and CASK. In terms of tissue distribution, mainly expressed in brain, in neuronal cell bodies of cerebellum, cortex, hippocampus, hypothalamus and spinal cord. In spinal cord predominantly expressed in motor neurons. Expressed in axons, presynaptic nerve terminals, glia cell processes.

The protein localises to the cell membrane. It localises to the cell junction. In terms of biological role, involved in cell-cell adhesion. Has both calcium-independent homophilic cell-cell adhesion activity and calcium-independent heterophilic cell-cell adhesion activity with IGSF4, NECTIN1 and NECTIN3. Interaction with EPB41L1 may regulate structure or function of cell-cell junctions. The chain is Cell adhesion molecule 3 (Cadm3) from Mus musculus (Mouse).